A 237-amino-acid chain; its full sequence is Large ribosomal subunit protein uL2 (237 aa).

The disordered stretch occupies residues 202-237; sequence FGGGNRKHPGKPTTVSRNAPPGRKVGHIAARRTGKR. Over residues 225-237 the composition is skewed to basic residues; that stretch reads KVGHIAARRTGKR.

The protein belongs to the universal ribosomal protein uL2 family. Part of the 50S ribosomal subunit. Forms a bridge to the 30S subunit in the 70S ribosome.

In terms of biological role, one of the primary rRNA binding proteins. Required for association of the 30S and 50S subunits to form the 70S ribosome, for tRNA binding and peptide bond formation. It has been suggested to have peptidyltransferase activity; this is somewhat controversial. Makes several contacts with the 16S rRNA in the 70S ribosome. The sequence is that of Large ribosomal subunit protein uL2 from Methanococcoides burtonii (strain DSM 6242 / NBRC 107633 / OCM 468 / ACE-M).